Here is a 122-residue protein sequence, read N- to C-terminus: Holo-[acyl-carrier-protein] synthase (122 aa).

Aspartate 9 and glutamate 58 together coordinate Mg(2+).

The protein belongs to the P-Pant transferase superfamily. AcpS family. It depends on Mg(2+) as a cofactor.

The protein resides in the cytoplasm. It catalyses the reaction apo-[ACP] + CoA = holo-[ACP] + adenosine 3',5'-bisphosphate + H(+). In terms of biological role, transfers the 4'-phosphopantetheine moiety from coenzyme A to a Ser of acyl-carrier-protein. This chain is Holo-[acyl-carrier-protein] synthase, found in Chlamydia pneumoniae (Chlamydophila pneumoniae).